The sequence spans 222 residues: Charged multivesicular body protein 4a (222 aa).

Disordered stretches follow at residues 1–21 (MSGLGRLFGKGKKEKGPTPEE) and 180–211 (VGDKEEEPSVKLPSVPSTHLPAGPAPKVDEDE). The segment at 1–116 (MSGLGRLFGK…ELAAQSMKKA (116 aa)) is interaction with phosphoinosides. The segment at 1-150 (MSGLGRLFGK…QISDAISRPM (150 aa)) is intramolecular interaction with C-terminus. Coiled coils occupy residues 20-105 (EEAI…VLRT) and 155-180 (DVDEDELLEELEELEQEELAQELLNV). Positions 151–222 (GFGDDVDEDE…ALKQLAEWVS (72 aa)) are intramolecular interaction with N-terminus. Ser196 carries the post-translational modification Phosphoserine.

This sequence belongs to the SNF7 family. In terms of assembly, probable core component of the endosomal sorting required for transport complex III (ESCRT-III). ESCRT-III components are thought to multimerize to form a flat lattice on the perimeter membrane of the endosome. Several assembly forms of ESCRT-III may exist that interact and act sequentially. Self-associates; overexpression leads to the assembly of filaments that curve and associate to create circular rings. Interacts with CHMP2A. Interacts with CHMP3; the interaction requires the release of CHMP4A autoinhibition. Interacts with CHMP4B. Interacts with CHMP4C. Interacts with CHMP6. Interacts with VPS4A. Interacts with PDCD6IP; the interaction is direct. Widely expressed. Expressed at higher level in heart, kidney, liver and skeletal muscle. Also expressed in brain, placenta, lung and pancreas.

Its subcellular location is the cytoplasmic vesicle membrane. It localises to the late endosome membrane. In terms of biological role, probable core component of the endosomal sorting required for transport complex III (ESCRT-III) which is involved in multivesicular bodies (MVBs) formation and sorting of endosomal cargo proteins into MVBs. MVBs contain intraluminal vesicles (ILVs) that are generated by invagination and scission from the limiting membrane of the endosome and mostly are delivered to lysosomes enabling degradation of membrane proteins, such as stimulated growth factor receptors, lysosomal enzymes and lipids. The MVB pathway appears to require the sequential function of ESCRT-O, -I,-II and -III complexes. ESCRT-III proteins mostly dissociate from the invaginating membrane before the ILV is released. The ESCRT machinery also functions in topologically equivalent membrane fission events, such as the terminal stages of cytokinesis and the budding of enveloped viruses (HIV-1 and other lentiviruses). ESCRT-III proteins are believed to mediate the necessary vesicle extrusion and/or membrane fission activities, possibly in conjunction with the AAA ATPase VPS4. When overexpressed, membrane-assembled circular arrays of CHMP4A filaments can promote or stabilize negative curvature and outward budding. Via its interaction with PDCD6IP involved in HIV-1 p6- and p9-dependent virus release. CHMP4A/B/C are required for the exosomal release of SDCBP, CD63 and syndecan. This chain is Charged multivesicular body protein 4a (CHMP4A), found in Homo sapiens (Human).